The primary structure comprises 153 residues: uncharacterized protein (153 aa).

This is an uncharacterized protein from Ureaplasma parvum serovar 3 (strain ATCC 700970).